The primary structure comprises 228 residues: Cytidylate kinase (228 aa).

10-18 (GPSGSGKGT) is an ATP binding site.

This sequence belongs to the cytidylate kinase family. Type 1 subfamily.

The protein localises to the cytoplasm. The catalysed reaction is CMP + ATP = CDP + ADP. The enzyme catalyses dCMP + ATP = dCDP + ADP. The protein is Cytidylate kinase of Acinetobacter baumannii (strain ACICU).